The chain runs to 189 residues: Ribonuclease M5 (189 aa).

Residues 8 to 91 enclose the Toprim domain; the sequence is KEIIVVEGKD…AFLPKEEALA (84 aa). The Mg(2+) site is built by Glu-14, Asp-60, and Asp-62.

This sequence belongs to the ribonuclease M5 family. The cofactor is Mg(2+).

It is found in the cytoplasm. The catalysed reaction is Endonucleolytic cleavage of RNA, removing 21 and 42 nucleotides, respectively, from the 5'- and 3'-termini of a 5S-rRNA precursor.. In terms of biological role, required for correct processing of both the 5' and 3' ends of 5S rRNA precursor. Cleaves both sides of a double-stranded region yielding mature 5S rRNA in one step. The protein is Ribonuclease M5 of Bacillus cereus (strain ATCC 14579 / DSM 31 / CCUG 7414 / JCM 2152 / NBRC 15305 / NCIMB 9373 / NCTC 2599 / NRRL B-3711).